The primary structure comprises 253 residues: 5'-nucleotidase SurE (253 aa).

Positions 8, 9, 39, and 97 each coordinate a divalent metal cation.

This sequence belongs to the SurE nucleotidase family. A divalent metal cation serves as cofactor.

The protein localises to the cytoplasm. The catalysed reaction is a ribonucleoside 5'-phosphate + H2O = a ribonucleoside + phosphate. Nucleotidase that shows phosphatase activity on nucleoside 5'-monophosphates. This Aeromonas hydrophila subsp. hydrophila (strain ATCC 7966 / DSM 30187 / BCRC 13018 / CCUG 14551 / JCM 1027 / KCTC 2358 / NCIMB 9240 / NCTC 8049) protein is 5'-nucleotidase SurE.